The primary structure comprises 148 residues: Large-conductance mechanosensitive channel (148 aa).

The next 3 helical transmembrane spans lie at Ile-21–Val-41, Ile-45–Val-65, and Gly-92–Val-112.

Belongs to the MscL family. Homopentamer.

It localises to the cell inner membrane. Its function is as follows. Channel that opens in response to stretch forces in the membrane lipid bilayer. May participate in the regulation of osmotic pressure changes within the cell. This is Large-conductance mechanosensitive channel from Bordetella petrii (strain ATCC BAA-461 / DSM 12804 / CCUG 43448).